The primary structure comprises 710 residues: Adenylosuccinate synthetase (710 aa).

2 disordered regions span residues 1–53 (MPVR…PQEA) and 84–110 (DEPPHGSQKPLSVAPYTANASNSSGRS). Composition is skewed to polar residues over residues 10-27 (YNNSSPGVSNALSPSTTA) and 101-110 (ANASNSSGRS). Residues 180–186 (GDEGKGK) and 210–212 (GHT) each bind GTP. Catalysis depends on Asp181, which acts as the Proton acceptor. Mg(2+) contacts are provided by Asp181 and Gly210. IMP-binding positions include 181–184 (DEGK), 208–211 (NAGH), Thr295, Lys309, Gln421, Thr437, and Lys567. His211 functions as the Proton donor in the catalytic mechanism. 563 to 569 (AVTKKPR) is a substrate binding site. Residues Arg569 and 697–699 (GNG) contribute to the GTP site.

Belongs to the adenylosuccinate synthetase family. In terms of assembly, homodimer. The cofactor is Mg(2+).

It is found in the cytoplasm. The enzyme catalyses IMP + L-aspartate + GTP = N(6)-(1,2-dicarboxyethyl)-AMP + GDP + phosphate + 2 H(+). The protein operates within purine metabolism; AMP biosynthesis via de novo pathway; AMP from IMP: step 1/2. In terms of biological role, plays an important role in the salvage pathway for purine nucleotide biosynthesis. Catalyzes the first committed step in the biosynthesis of AMP from IMP. This is Adenylosuccinate synthetase (ADSS) from Leishmania donovani.